Here is a 298-residue protein sequence, read N- to C-terminus: Elongation factor Ts (298 aa).

The involved in Mg(2+) ion dislocation from EF-Tu stretch occupies residues 79–82 (TDFV).

This sequence belongs to the EF-Ts family.

The protein localises to the cytoplasm. Its function is as follows. Associates with the EF-Tu.GDP complex and induces the exchange of GDP to GTP. It remains bound to the aminoacyl-tRNA.EF-Tu.GTP complex up to the GTP hydrolysis stage on the ribosome. The chain is Elongation factor Ts from Cereibacter sphaeroides (strain ATCC 17025 / ATH 2.4.3) (Rhodobacter sphaeroides).